Consider the following 1019-residue polypeptide: Mediator of replication checkpoint protein 1 (1019 aa).

Disordered stretches follow at residues 1 to 33 (MASLDENADELHRMDSSDEASINDDQEDILDTP), 105 to 143 (QGGKSSLQKKEVEQIETQEGGDNAKGSPSSENKDSDRNS), 166 to 202 (NSATSHSKSDNLDSESADDSDLADESELSKKYTSDRK), 261 to 290 (EEEANSTEPPNVEKEEPKPSVDRSTGIVNS), 443 to 683 (IQGE…SKTF), and 965 to 1019 (TQRP…SDFD). Residues 17–30 (SDEASINDDQEDIL) show a composition bias toward acidic residues. A compositionally biased stretch (acidic residues) spans 177–191 (LDSESADDSDLADES). Composition is skewed to basic and acidic residues over residues 192 to 202 (ELSKKYTSDRK), 271 to 281 (NVEKEEPKPSV), and 454 to 468 (LERARNDAEKIRQLE). The segment covering 476 to 486 (DEGELNDEEEV) has biased composition (acidic residues). Residues 487 to 503 (ISSSNTPSTKAKTTNKV) are compositionally biased toward polar residues. Residues 556 to 580 (MIRDSFDRLSSESIKDSQKTEELHD) show a composition bias toward basic and acidic residues. Composition is skewed to polar residues over residues 590-607 (QSTSLYVQNSQPSASQLT) and 630-658 (NTSSTQPSQVDSLVPTQLDSTIPTQIDSV). S604 is subject to Phosphoserine. T645 bears the Phosphothreonine mark. A compositionally biased stretch (basic and acidic residues) spans 671 to 681 (EERRESRRDSK).

Interacts with cds1. Phosphorylated by rad3 and tel1.

The protein localises to the nucleus. Its function is as follows. Component of the replisome and is required for rad3-dependent activation of the checkpoint kinase cds1 in response to replication fork arrest. Phosphorylation allows it to mediate the activation of cds1. This is Mediator of replication checkpoint protein 1 (mrc1) from Schizosaccharomyces pombe (strain 972 / ATCC 24843) (Fission yeast).